The sequence spans 173 residues: Skp-like protein (173 aa).

The first 19 residues, 1–19 (MKKFLLLSLMSLASSTVFA), serve as a signal peptide directing secretion.

It belongs to the Skp family.

In Chlamydia muridarum (strain MoPn / Nigg), this protein is Skp-like protein.